Here is a 644-residue protein sequence, read N- to C-terminus: Fidgetin-like protein 2 (644 aa).

2 disordered regions span residues 1–36 and 285–323; these read MHWT…ELPP and AADG…GGGG. Over residues 10 to 27 the composition is skewed to polar residues; sequence PLNQWPEQHLDVSSTTPS. Positions 285–294 are enriched in low complexity; the sequence is AADGASYPAA. ATP contacts are provided by residues Ala390 and 430-435; that span reads GCGKAL.

Belongs to the AAA ATPase family. Requires Mg(2+) as cofactor.

The protein localises to the cytoplasm. It localises to the cell cortex. It carries out the reaction ATP + H2O = ADP + phosphate + H(+). In terms of biological role, microtubule-severing enzyme that negatively regulates cell migration and wound healing. In migrating cells, targets dynamic microtubules (MTs) at the leading edge and severs them, thereby suppressing motility. Microtubule severing releases ARHGEF2 which activates RHOA, which in turn regulates focal ahesion turnover via focal adhesion kinase, as opposed to F-actin polymerization, to suppress cell motility. Negative regulator of axon regeneration that suppresses axonal growth by selectively severing dynamic MTs in the distal axon shaft and growth cone. Contributes to proper cell branching during endothelial and neuronal development. In Mus musculus (Mouse), this protein is Fidgetin-like protein 2 (Fignl2).